The chain runs to 141 residues: Hemoglobin subunit alpha-3 (141 aa).

One can recognise a Globin domain in the interval 1–141 (VLSPADKTNV…VSTVLTSKYR (141 aa)). Histidine 58 is an O2 binding site. Residue histidine 87 coordinates heme b.

This sequence belongs to the globin family. As to quaternary structure, heterotetramer of two alpha chains and two beta chains. Red blood cells.

Involved in oxygen transport from the lung to the various peripheral tissues. This is Hemoglobin subunit alpha-3 from Pan troglodytes (Chimpanzee).